A 291-amino-acid polypeptide reads, in one-letter code: NAD kinase (291 aa).

The active-site Proton acceptor is the D73. Residues 73–74, 147–148, R175, D177, 188–193, A212, and Q246 contribute to the NAD(+) site; these read DG, ND, and TAYALS.

This sequence belongs to the NAD kinase family. A divalent metal cation is required as a cofactor.

The protein resides in the cytoplasm. It catalyses the reaction NAD(+) + ATP = ADP + NADP(+) + H(+). Functionally, involved in the regulation of the intracellular balance of NAD and NADP, and is a key enzyme in the biosynthesis of NADP. Catalyzes specifically the phosphorylation on 2'-hydroxyl of the adenosine moiety of NAD to yield NADP. This is NAD kinase from Polaromonas naphthalenivorans (strain CJ2).